The chain runs to 141 residues: Large ribosomal subunit protein uL11c (141 aa).

This sequence belongs to the universal ribosomal protein uL11 family. As to quaternary structure, part of the ribosomal stalk of the 50S ribosomal subunit. Interacts with L10 and the large rRNA to form the base of the stalk. L10 forms an elongated spine to which L12 dimers bind in a sequential fashion forming a multimeric L10(L12)X complex.

The protein resides in the plastid. The protein localises to the chloroplast. Forms part of the ribosomal stalk which helps the ribosome interact with GTP-bound translation factors. This is Large ribosomal subunit protein uL11c from Pyropia yezoensis (Susabi-nori).